The primary structure comprises 981 residues: GPI ethanolamine phosphate transferase 1 (981 aa).

The Cytoplasmic segment spans residues 1 to 6 (MAGSSR). Residues 7–27 (IGFMAIAVAFHLVYILSIFDI) form a helical membrane-spanning segment. Residues 28–464 (YFVSPIVTGM…LQTYDWLFLR (437 aa)) lie on the Lumenal side of the membrane. N-linked (GlcNAc...) asparagine glycosylation is found at asparagine 148, asparagine 211, and asparagine 295. The chain crosses the membrane as a helical span at residues 465–485 (ALITIGYLGWMAYATTTVLSL). At 486–496 (YVVKESMSPQR) the chain is on the cytoplasmic side. The chain crosses the membrane as a helical span at residues 497-517 (TLLGSAFFLSLLVALYSSFII). The Lumenal portion of the chain corresponds to 518–519 (SK). Residues 520 to 540 (SPPAYYLYAFFPVLFWEEVYA) traverse the membrane as a helical segment. The Cytoplasmic segment spans residues 541–560 (RRANVAKGFQALFGHVKSGG). Residues 561-581 (AVVALVFNVVLYLGVIQSLAL) traverse the membrane as a helical segment. Topologically, residues 582–587 (AYIHRE) are lumenal. The chain crosses the membrane as a helical span at residues 588–608 (ILTGLFVLGAFWPMTQGISFL). At 609–611 (RSH) the chain is on the cytoplasmic side. A helical transmembrane segment spans residues 612–632 (LFLSMLWFFSCLAMSTFTLLP). At 633–638 (AMKVED) the chain is on the lumenal side. Residues 639 to 659 (IPLIMAGGGLMTFVGLAYLVL) traverse the membrane as a helical segment. The Cytoplasmic segment spans residues 660–681 (EDFILSDVSSSKTKLKRLHTSR). Residues 682 to 702 (TLLGIQVGLIILAMLVTHSSA) traverse the membrane as a helical segment. Residues 703–708 (TSLQAK) lie on the Lumenal side of the membrane. A helical transmembrane segment spans residues 709–729 (LGLPKGNQIVGWFVLVTSLLM). The Cytoplasmic portion of the chain corresponds to 730–744 (PLAYRLQPNSHYMHR). Residues 745 to 767 (LAIIFLTCAPTFVILTISYEGLF) traverse the membrane as a helical segment. Topologically, residues 768–819 (YVAFSITLLSWVRLEYAVDAFTQEKAKKQATVAGSQQHTPSTFRPLSLSDAR) are lumenal. The chain crosses the membrane as a helical span at residues 820 to 840 (IALFFMVLLQSAFFSTGNIAS). The Cytoplasmic segment spans residues 841–862 (ISSFSLESVSRLIPVFDPFSQG). The helical transmembrane segment at 863 to 883 (ALLILKIIIPFFLISANLGVL) threads the bilayer. The Lumenal portion of the chain corresponds to 884–892 (NKRLGVAPS). Residues 893 to 913 (AIFMVVLTASDVLTLYFFWVV) traverse the membrane as a helical segment. Residues 914 to 929 (KDEGSWLEIGSTITHF) are Cytoplasmic-facing. The helical transmembrane segment at 930–950 (AIASFLCVFVAALEFVSAAFI) threads the bilayer. Residues 951 to 981 (AGIEVEDTKSAALTSASTKADEKVPPVAGAE) lie on the Lumenal side of the membrane.

The protein belongs to the PIGG/PIGN/PIGO family. PIGN subfamily.

It is found in the endoplasmic reticulum membrane. Its pathway is glycolipid biosynthesis; glycosylphosphatidylinositol-anchor biosynthesis. Ethanolamine phosphate transferase involved in glycosylphosphatidylinositol-anchor biosynthesis. Transfers ethanolamine phosphate to the first alpha-1,4-linked mannose of the glycosylphosphatidylinositol precursor of GPI-anchor. The chain is GPI ethanolamine phosphate transferase 1 (MCD4) from Gibberella zeae (strain ATCC MYA-4620 / CBS 123657 / FGSC 9075 / NRRL 31084 / PH-1) (Wheat head blight fungus).